Reading from the N-terminus, the 183-residue chain is Putative manganese efflux pump MntP (183 aa).

6 helical membrane-spanning segments follow: residues 8–28 (MIALSLMALALGMDAFSVALG), 39–59 (IFYIGLTIGLFHIFMPLVGMA), 68–88 (FGSIATYAGGVLLLWLGGQMI), 108–128 (LFFAFSVSLDSFSVGLSLGIF), 133–153 (MATILLFGLFSTVLTWIGLLV), and 162–182 (GSYSEALGGSILLVFGLKLLF).

It belongs to the MntP (TC 9.B.29) family.

The protein resides in the cell membrane. In terms of biological role, probably functions as a manganese efflux pump. This is Putative manganese efflux pump MntP from Geobacillus thermodenitrificans (strain NG80-2).